The primary structure comprises 282 residues: Shikimate dehydrogenase (NADP(+)) (282 aa).

Residues 15–17 and Thr62 each bind shikimate; that span reads SKS. The active-site Proton acceptor is Lys66. Residues Asn87 and Asp103 each contribute to the shikimate site. Residues 127–131, 151–156, and Met220 contribute to the NADP(+) site; these read GAGGA and NRTHTK. Tyr222 contributes to the shikimate binding site. Gly244 lines the NADP(+) pocket.

Belongs to the shikimate dehydrogenase family. As to quaternary structure, homodimer.

The catalysed reaction is shikimate + NADP(+) = 3-dehydroshikimate + NADPH + H(+). The protein operates within metabolic intermediate biosynthesis; chorismate biosynthesis; chorismate from D-erythrose 4-phosphate and phosphoenolpyruvate: step 4/7. Its function is as follows. Involved in the biosynthesis of the chorismate, which leads to the biosynthesis of aromatic amino acids. Catalyzes the reversible NADPH linked reduction of 3-dehydroshikimate (DHSA) to yield shikimate (SA). The polypeptide is Shikimate dehydrogenase (NADP(+)) (Shewanella baltica (strain OS223)).